A 281-amino-acid chain; its full sequence is Digeranylgeranylglyceryl phosphate synthase (281 aa).

The next 7 membrane-spanning stretches (helical) occupy residues 14–34 (AMAA…LSSA), 38–58 (VSLS…VTGA), 95–115 (LFLF…CGII), 149–169 (FLFG…VLFL), 207–227 (ASYI…VPYL), 235–255 (YLFV…QILG), and 259–279 (AARS…SFIV).

It belongs to the UbiA prenyltransferase family. DGGGP synthase subfamily. It depends on Mg(2+) as a cofactor.

It is found in the cell membrane. It carries out the reaction sn-3-O-(geranylgeranyl)glycerol 1-phosphate + (2E,6E,10E)-geranylgeranyl diphosphate = 2,3-bis-O-(geranylgeranyl)-sn-glycerol 1-phosphate + diphosphate. The protein operates within membrane lipid metabolism; glycerophospholipid metabolism. In terms of biological role, prenyltransferase that catalyzes the transfer of the geranylgeranyl moiety of geranylgeranyl diphosphate (GGPP) to the C2 hydroxyl of (S)-3-O-geranylgeranylglyceryl phosphate (GGGP). This reaction is the second ether-bond-formation step in the biosynthesis of archaeal membrane lipids. The sequence is that of Digeranylgeranylglyceryl phosphate synthase from Methanococcoides burtonii (strain DSM 6242 / NBRC 107633 / OCM 468 / ACE-M).